The primary structure comprises 417 residues: MAQKEGGRTVPCCSRPKVAALTAGTLLLLTAIGAASWAIVAVLLRSDQEPLYPVQVSSADARLMVFDKTEGTWRLLCSSRSNARVAGLSCVEMGFLRALTHSELDVRTAGANGTSGFFCVDEGRLPHTQRLLEVISVCDCPRGRFLATICQDCGRRKLPVDRIVGGRDTSLGRWPWQVSLRYDGAHLCGGSLLSGDWVLTAAHCFPERNRVLSRWRVFAGAVAQASPHGLQLAVQAVVYHGGYLPFRDPNSEENSNDIALVHLSSPLPLTEYIQPVCLPAAGQALVDGKICTVTGWGNTQYYGQQAGVLQEARVPIISNDVCNGADFYGNQIKPKMFCAGYPEGGIDACQGDSGGPFVCEDSISRTPRWRLCGIVSWGTGCALAQKPGVYTKVSDFREWIFQAIKTHSEASGMVTQL.

The Cytoplasmic portion of the chain corresponds to 1–23 (MAQKEGGRTVPCCSRPKVAALTA). Residues 24–44 (GTLLLLTAIGAASWAIVAVLL) form a helical; Signal-anchor for type II membrane protein membrane-spanning segment. Residues 45–417 (RSDQEPLYPV…SEASGMVTQL (373 aa)) are Extracellular-facing. The region spanning 54-151 (VQVSSADARL…RGRFLATICQ (98 aa)) is the SRCR domain. Cystine bridges form between Cys-77–Cys-140, Cys-90–Cys-150, Cys-119–Cys-138, Cys-153–Cys-277, Cys-188–Cys-204, Cys-291–Cys-359, Cys-322–Cys-338, and Cys-349–Cys-381. Residue Asn-112 is glycosylated (N-linked (GlcNAc...) asparagine). Positions 163–405 (IVGGRDTSLG…FREWIFQAIK (243 aa)) constitute a Peptidase S1 domain. Catalysis depends on charge relay system residues His-203 and Asp-257. The Charge relay system role is filled by Ser-353.

The protein belongs to the peptidase S1 family.

The protein resides in the membrane. It catalyses the reaction Cleavage after basic amino-acid residues, with Arg strongly preferred to Lys.. Its function is as follows. Plays an essential role in cell growth and maintenance of cell morphology. May mediate the activating cleavage of HGF and MST1/HGFL. Plays a role in the proteolytic processing of ACE2. The sequence is that of Serine protease hepsin (HPN) from Pongo abelii (Sumatran orangutan).